A 429-amino-acid chain; its full sequence is Cytochrome c biogenesis protein CcsB (429 aa).

Helical transmembrane passes span 14 to 34, 72 to 92, and 162 to 182; these read LKVA…GTAL, SFWF…CSWK, and VGPP…TYGV.

The protein belongs to the Ccs1/CcsB family. May interact with CcsA.

The protein resides in the cellular thylakoid membrane. Required during biogenesis of c-type cytochromes (cytochrome c6 and cytochrome f) at the step of heme attachment. In Prochlorococcus marinus (strain SARG / CCMP1375 / SS120), this protein is Cytochrome c biogenesis protein CcsB.